The chain runs to 508 residues: 3-octaprenyl-4-hydroxybenzoate carboxy-lyase (508 aa).

A Mn(2+)-binding site is contributed by Asn178. Residues 181–183 (IYR), 195–197 (RWL), and 200–201 (RG) contribute to the prenylated FMN site. Residue Glu244 coordinates Mn(2+). Asp303 (proton donor) is an active-site residue.

This sequence belongs to the UbiD family. Homohexamer. Prenylated FMN serves as cofactor. Mn(2+) is required as a cofactor.

Its subcellular location is the cell membrane. The catalysed reaction is a 4-hydroxy-3-(all-trans-polyprenyl)benzoate + H(+) = a 2-(all-trans-polyprenyl)phenol + CO2. Its pathway is cofactor biosynthesis; ubiquinone biosynthesis. Catalyzes the decarboxylation of 3-octaprenyl-4-hydroxy benzoate to 2-octaprenylphenol, an intermediate step in ubiquinone biosynthesis. The polypeptide is 3-octaprenyl-4-hydroxybenzoate carboxy-lyase (Cupriavidus taiwanensis (strain DSM 17343 / BCRC 17206 / CCUG 44338 / CIP 107171 / LMG 19424 / R1) (Ralstonia taiwanensis (strain LMG 19424))).